A 547-amino-acid chain; its full sequence is Phenylalanine--tRNA ligase beta subunit (547 aa).

The B5 domain maps to 269–344; the sequence is LDVRFMEVDV…IGYGYENITP (76 aa). Mg(2+)-binding residues include aspartate 322, aspartate 328, glutamate 331, and aspartate 332.

Belongs to the phenylalanyl-tRNA synthetase beta subunit family. Type 2 subfamily. Tetramer of two alpha and two beta subunits. The cofactor is Mg(2+).

The protein localises to the cytoplasm. The catalysed reaction is tRNA(Phe) + L-phenylalanine + ATP = L-phenylalanyl-tRNA(Phe) + AMP + diphosphate + H(+). This Archaeoglobus fulgidus (strain ATCC 49558 / DSM 4304 / JCM 9628 / NBRC 100126 / VC-16) protein is Phenylalanine--tRNA ligase beta subunit.